Consider the following 401-residue polypeptide: F-box protein At1g69090 (401 aa).

The interval 1–23 (MASPTLALAQSPPPKSPAVSVSQ) is disordered. An F-box domain is found at 27–74 (HCWSKLPLDLMQLVFERLAFLDFERAKSVCSSWQFGSKQSKPNNQIPW).

This chain is F-box protein At1g69090, found in Arabidopsis thaliana (Mouse-ear cress).